The chain runs to 198 residues: Protein FAM219B (198 aa).

Disordered regions lie at residues 1–58 (MATA…KRGP) and 83–146 (RRKG…EQVN). Phosphoserine occurs at positions 14, 91, 125, and 127. Residues 134-146 (RYSSGYSSAEQVN) show a composition bias toward polar residues.

It belongs to the FAM219 family.

The chain is Protein FAM219B (FAM219B) from Homo sapiens (Human).